The primary structure comprises 1058 residues: UPF0507 protein YALI0E18612g (1058 aa).

Residues threonine 252–alanine 394 enclose the VPS9 domain.

It belongs to the UPF0507 family.

The sequence is that of UPF0507 protein YALI0E18612g from Yarrowia lipolytica (strain CLIB 122 / E 150) (Yeast).